The sequence spans 128 residues: Large ribosomal subunit protein eL8 (128 aa).

It belongs to the eukaryotic ribosomal protein eL8 family. Part of the 50S ribosomal subunit. Probably part of the RNase P complex.

Its subcellular location is the cytoplasm. Functionally, multifunctional RNA-binding protein that recognizes the K-turn motif in ribosomal RNA, the RNA component of RNase P, box H/ACA, box C/D and box C'/D' sRNAs. This chain is Large ribosomal subunit protein eL8, found in Staphylothermus marinus (strain ATCC 43588 / DSM 3639 / JCM 9404 / F1).